Consider the following 865-residue polypeptide: Xylosyltransferase 2 (865 aa).

The Cytoplasmic portion of the chain corresponds to 1 to 15; that stretch reads MVASARVQKLVRRYK. A helical; Signal-anchor for type II membrane protein transmembrane segment spans residues 16 to 36; it reads LAIATALAILLLQGLVVWSFS. The Lumenal portion of the chain corresponds to 37–865; sequence GLEEDEAGEK…GPVKADGRLR (829 aa). The segment at 41-157 is disordered; the sequence is DEAGEKGRQR…EGAPQPTDNG (117 aa). The segment covering 53–65 has biased composition (basic and acidic residues); sequence RPLDPGEGSKDTD. Positions 73-82 are enriched in basic residues; that stretch reads STGRRHGRWR. Residue Asn-122 is glycosylated (N-linked (GlcNAc...) asparagine). Low complexity predominate over residues 125–137; it reads GAAAGEALVGAAG. 4 disulfide bridges follow: Cys-162/Cys-190, Cys-206/Cys-448, Cys-467/Cys-480, and Cys-469/Cys-478. UDP-alpha-D-xylose is bound by residues Val-239, Asp-267, and 296 to 298; that span reads TIW. A glycan (N-linked (GlcNAc...) asparagine) is linked at Asn-327. 400-401 is a UDP-alpha-D-xylose binding site; that stretch reads DW. UDP-alpha-D-xylose contacts are provided by residues Ser-481 and 504-505; that span reads RK. Cystine bridges form between Cys-581-Cys-833 and Cys-826-Cys-839. Asn-683 is a glycosylation site (N-linked (GlcNAc...) asparagine). Residues 846-865 form a disordered region; sequence SLSPDPKSELGPVKADGRLR.

Belongs to the glycosyltransferase 14 family. XylT subfamily. As to quaternary structure, monomer. Requires Mg(2+) as cofactor. Mn(2+) is required as a cofactor. Post-translationally, contains disulfide bonds.

It localises to the golgi apparatus membrane. The protein localises to the secreted. The catalysed reaction is UDP-alpha-D-xylose + L-seryl-[protein] = 3-O-(beta-D-xylosyl)-L-seryl-[protein] + UDP + H(+). The protein operates within glycan metabolism; chondroitin sulfate biosynthesis. It functions in the pathway glycan metabolism; heparan sulfate biosynthesis. Its function is as follows. Catalyzes the first step in the biosynthesis of chondroitin sulfate, heparan sulfate and dermatan sulfate proteoglycans, such as DCN. Transfers D-xylose from UDP-D-xylose to specific serine residues of the core protein. The protein is Xylosyltransferase 2 (XYLT2) of Pan troglodytes (Chimpanzee).